The chain runs to 480 residues: MSPQTETKASVGFKAGVKDYKLTYYTPQYKPLDTDILAAFRVTPQPGVPSEEAGAAVAAESSTGTWTTVWTDGLTSLDRYKGRCYHIDPVPGEENQYICYVAYPLDLFEEGSVTNMFTSIVGNVFGFKALRALRLEDLRVPISYIKTFQGPPHGIQVERDKLNKYGRPLLGCTIKPKLGLSAKNYGRAVYECLRGGLDFTKDDENVNSQPFMRWRDRFLFCAEALFKSQAETGEIKGHYLNATAGTCEEMMKRAVFARELGAPIVMHDYLTGGFTANTTLAHYCRDNGLLLHIHRAMHAVIDMQKNHGMQFRVLAKALRLSGGDHIHAGTVVGKLEGERDITLGFVDLLRDDHTEIDPDRGIYFTQSWVSTPGVLPVASGGIHVWHMPALTEIFGDDSVLQFGGGTLGHPWGNAPGAVANRVALEACVQARNEGRDLAREGATIIREASKWSPELAAACEVWKEIKFEFPAVDILDKKKS.

Positions 1-2 are excised as a propeptide; it reads MS. Position 3 is an N-acetylproline (Pro3). Lys14 is subject to N6,N6,N6-trimethyllysine. Asn123 and Thr173 together coordinate substrate. Lys175 acts as the Proton acceptor in catalysis. Lys177 is a substrate binding site. The Mg(2+) site is built by Lys201, Asp203, and Glu204. At Lys201 the chain carries N6-carboxylysine. The Proton acceptor role is filled by His294. The substrate site is built by Arg295, His327, and Ser379.

Belongs to the RuBisCO large chain family. Type I subfamily. Heterohexadecamer of 8 large chains and 8 small chains; disulfide-linked. The disulfide link is formed within the large subunit homodimers. Requires Mg(2+) as cofactor. The disulfide bond which can form in the large chain dimeric partners within the hexadecamer appears to be associated with oxidative stress and protein turnover.

The protein resides in the plastid. It is found in the chloroplast. The catalysed reaction is 2 (2R)-3-phosphoglycerate + 2 H(+) = D-ribulose 1,5-bisphosphate + CO2 + H2O. It carries out the reaction D-ribulose 1,5-bisphosphate + O2 = 2-phosphoglycolate + (2R)-3-phosphoglycerate + 2 H(+). Functionally, ruBisCO catalyzes two reactions: the carboxylation of D-ribulose 1,5-bisphosphate, the primary event in carbon dioxide fixation, as well as the oxidative fragmentation of the pentose substrate in the photorespiration process. Both reactions occur simultaneously and in competition at the same active site. The polypeptide is Ribulose bisphosphate carboxylase large chain (Rivina humilis (Rougeplant)).